The primary structure comprises 250 residues: Large ribosomal subunit protein uL29m (250 aa).

A mitochondrion-targeting transit peptide spans 1-24 (MRPGAASIRTTGSVLAFLVPSAQC). Residues 66–86 (VLSKKGSGDQPPKPVPITEKV) form a disordered region.

This sequence belongs to the universal ribosomal protein uL29 family. In terms of assembly, component of the mitochondrial large ribosomal subunit. Mature mitochondrial ribosomes consist of a small (37S) and a large (54S) subunit. The 37S subunit contains at least 33 different proteins and 1 molecule of RNA (15S). The 54S subunit contains at least 45 different proteins and 1 molecule of RNA (21S).

The protein localises to the mitochondrion. In Phaeosphaeria nodorum (strain SN15 / ATCC MYA-4574 / FGSC 10173) (Glume blotch fungus), this protein is Large ribosomal subunit protein uL29m (MRPL4).